Reading from the N-terminus, the 237-residue chain is Insulin-like growth factor-binding protein 6 (237 aa).

A signal peptide spans 1–25 (MTPHRLLPPLLLTLLLAARPGGALA). Residues 26–105 (RCPGCGQGVS…LQGRGRCGRA (80 aa)) form the IGFBP N-terminal domain. Intrachain disulfides connect C27–C30, C38–C42, C55–C61, C69–C82, and C76–C102. The disordered stretch occupies residues 101–158 (RCGRARTPSGENPKESKPQAGTARSQDVNRRDQQRNSGTSTTPSRSNSGGVQDTEMGP). Residues 135–151 (RNSGTSTTPSRSNSGGV) show a composition bias toward polar residues. A Thyroglobulin type-1 domain is found at 156-231 (MGPCRKHLDS…SEGGDGSSLC (76 aa)). Cystine bridges form between C159–C186, C197–C208, and C210–C231. Positions 215–237 (GQPLPGSSEGGDGSSLCPTGSSG) are disordered.

Interacts (via C-terminal domain) with PHB2. In terms of processing, O-glycosylated.

The protein resides in the secreted. Functionally, IGF-binding proteins prolong the half-life of the IGFs and have been shown to either inhibit or stimulate the growth promoting effects of the IGFs on cell culture. They alter the interaction of IGFs with their cell surface receptors. Activates the MAPK signaling pathway and induces cell migration. The polypeptide is Insulin-like growth factor-binding protein 6 (IGFBP6) (Bos taurus (Bovine)).